A 361-amino-acid chain; its full sequence is Alanine racemase (361 aa).

Catalysis depends on Lys-34, which acts as the Proton acceptor; specific for D-alanine. Lys-34 bears the N6-(pyridoxal phosphate)lysine mark. Arg-129 serves as a coordination point for substrate. Tyr-256 acts as the Proton acceptor; specific for L-alanine in catalysis. Met-304 provides a ligand contact to substrate.

The protein belongs to the alanine racemase family. The cofactor is pyridoxal 5'-phosphate.

It catalyses the reaction L-alanine = D-alanine. It functions in the pathway amino-acid biosynthesis; D-alanine biosynthesis; D-alanine from L-alanine: step 1/1. Functionally, catalyzes the interconversion of L-alanine and D-alanine. May also act on other amino acids. The polypeptide is Alanine racemase (alr) (Corynebacterium glutamicum (strain R)).